Consider the following 343-residue polypeptide: Putative dihydroflavonol 4-reductase (343 aa).

Tyr150 is a binding site for NADP(+).

This sequence belongs to the NAD(P)-dependent epimerase/dehydratase family. Dihydroflavonol-4-reductase subfamily.

The enzyme catalyses a (2R,3S,4S)-leucoanthocyanidin + NADP(+) = a (2R,3R)-dihydroflavonol + NADPH + H(+). It participates in secondary metabolite biosynthesis; flavonoid biosynthesis. The protein is Putative dihydroflavonol 4-reductase (dfrA) of Synechocystis sp. (strain ATCC 27184 / PCC 6803 / Kazusa).